We begin with the raw amino-acid sequence, 470 residues long: Nuclear receptor subfamily 0 group B member 1 (470 aa).

Tandem repeats lie at residues 1 to 67 (MAGE…YRCC), 68 to 133 (FCGK…YRCC), and 134 to 200 (FCGE…YRCC). A 4 X 67 AA tandem repeats region spans residues 1-253 (MAGEDHQWQG…RPVALKNPQV (253 aa)). 3 consecutive short sequence motifs (LXXLL motif) follow at residues 13–17 (LYNML), 80–84 (LYSML), and 146–150 (LYSLL). The 4; truncated repeat unit spans residues 201 to 253 (FCGEDQPQQGSTLYSMPTSTNQTPAAPEERPGAPWWDTSCGALRPVALKNPQV). The NR LBD domain maps to 205-469 (DQPQQGSTLY…DMMLEMLCTK (265 aa)). An AF-2 motif motif is present at residues 461–466 (MMLEML).

This sequence belongs to the nuclear hormone receptor family. NR0 subfamily. Homodimer. Interacts with NR5A1, NR5A2, NR0B2 and with COPS2. Interacts with ESRRB; represses ESRRB activity at the GATA6 promoter.

Its subcellular location is the nucleus. It is found in the cytoplasm. Its function is as follows. Nuclear receptor that lacks a DNA-binding domain and acts as a corepressor that inhibits the transcriptional activity of other nuclear receptors through heterodimeric interactions. Component of a cascade required for the development of the hypothalamic-pituitary-adrenal-gonadal axis. May also have a role in the development of the embryo and in the maintenance of embryonic stem cell pluripotency. The protein is Nuclear receptor subfamily 0 group B member 1 (NR0B1) of Callithrix jacchus (White-tufted-ear marmoset).